Reading from the N-terminus, the 252-residue chain is MTQHSRNTPQFYLTAPTPCPYLEGFQERKVFTHLVGDKAGELNDLLTHGGFRRSQSIAYRPACDLCRACVSVRVIAGEFEPSRNLRKVLHRNADLVGEMRNAVPTSEQYSIFRAYLDARHHDGGMADMTVLDYAMMVEDTHVTTRIVEYRRRTDSGKQGGELVAAALTDVLGDGLSMVYSFFDPDVDDRSLGTFMILDHIARARSMGLPYVYLGYWIEGSSKMSYKARFLPQQRLSPNGWLRVDATGIATQD.

Belongs to the R-transferase family. Bpt subfamily.

The protein localises to the cytoplasm. The catalysed reaction is N-terminal L-glutamyl-[protein] + L-leucyl-tRNA(Leu) = N-terminal L-leucyl-L-glutamyl-[protein] + tRNA(Leu) + H(+). It catalyses the reaction N-terminal L-aspartyl-[protein] + L-leucyl-tRNA(Leu) = N-terminal L-leucyl-L-aspartyl-[protein] + tRNA(Leu) + H(+). Its function is as follows. Functions in the N-end rule pathway of protein degradation where it conjugates Leu from its aminoacyl-tRNA to the N-termini of proteins containing an N-terminal aspartate or glutamate. This Afipia carboxidovorans (strain ATCC 49405 / DSM 1227 / KCTC 32145 / OM5) (Oligotropha carboxidovorans) protein is Aspartate/glutamate leucyltransferase.